A 69-amino-acid polypeptide reads, in one-letter code: Putative membrane protein insertion efficiency factor (69 aa).

This sequence belongs to the UPF0161 family.

The protein resides in the cell inner membrane. Its function is as follows. Could be involved in insertion of integral membrane proteins into the membrane. The polypeptide is Putative membrane protein insertion efficiency factor (Magnetococcus marinus (strain ATCC BAA-1437 / JCM 17883 / MC-1)).